Here is a 732-residue protein sequence, read N- to C-terminus: Eukaryotic translation initiation factor 3 subunit B (732 aa).

The sufficient for interaction with HCR1 and TIF32 stretch occupies residues 1–94 (MTTLESLKIE…LFIEMESVSA (94 aa)). The segment at 1-219 (MTTLESLKIE…GVTSWGGPNF (219 aa)) is sufficient for interaction with PIC8. In terms of domain architecture, RRM spans 37-120 (NFLVVDGAPV…HRLLVNSLND (84 aa)). 4 WD repeats span residues 185–224 (ARKNWSNDVVKFSPKGTYLLSFHDQGVTSWGGPNFDRLKR), 237–280 (PTEK…LMKT), 439–481 (EMKD…KFFA), and 507–554 (VDQQ…KTLN).

This sequence belongs to the eIF-3 subunit B family. As to quaternary structure, component of the eukaryotic translation initiation factor 3 (eIF-3) complex.

The protein localises to the cytoplasm. In terms of biological role, RNA-binding component of the eukaryotic translation initiation factor 3 (eIF-3) complex, which is involved in protein synthesis of a specialized repertoire of mRNAs and, together with other initiation factors, stimulates binding of mRNA and methionyl-tRNAi to the 40S ribosome. The eIF-3 complex specifically targets and initiates translation of a subset of mRNAs involved in cell proliferation. The protein is Eukaryotic translation initiation factor 3 subunit B of Kluyveromyces lactis (strain ATCC 8585 / CBS 2359 / DSM 70799 / NBRC 1267 / NRRL Y-1140 / WM37) (Yeast).